The sequence spans 256 residues: Ribonuclease HII (256 aa).

One can recognise an RNase H type-2 domain in the interval 73–256 (KLIAGIDEAG…RVSFTKNFIV (184 aa)). Asp79, Glu80, and Asp171 together coordinate a divalent metal cation.

The protein belongs to the RNase HII family. It depends on Mn(2+) as a cofactor. Requires Mg(2+) as cofactor.

Its subcellular location is the cytoplasm. It catalyses the reaction Endonucleolytic cleavage to 5'-phosphomonoester.. In terms of biological role, endonuclease that specifically degrades the RNA of RNA-DNA hybrids. In Acetivibrio thermocellus (strain ATCC 27405 / DSM 1237 / JCM 9322 / NBRC 103400 / NCIMB 10682 / NRRL B-4536 / VPI 7372) (Clostridium thermocellum), this protein is Ribonuclease HII.